Consider the following 375-residue polypeptide: DNA replication and repair protein RecF (375 aa).

30-37 (GENAQGKT) contacts ATP.

This sequence belongs to the RecF family.

The protein localises to the cytoplasm. Its function is as follows. The RecF protein is involved in DNA metabolism; it is required for DNA replication and normal SOS inducibility. RecF binds preferentially to single-stranded, linear DNA. It also seems to bind ATP. In Latilactobacillus sakei subsp. sakei (strain 23K) (Lactobacillus sakei subsp. sakei), this protein is DNA replication and repair protein RecF.